We begin with the raw amino-acid sequence, 121 residues long: Large ribosomal subunit protein uL18 (121 aa).

The protein belongs to the universal ribosomal protein uL18 family. Part of the 50S ribosomal subunit; part of the 5S rRNA/L5/L18/L25 subcomplex. Contacts the 5S and 23S rRNAs.

In terms of biological role, this is one of the proteins that bind and probably mediate the attachment of the 5S RNA into the large ribosomal subunit, where it forms part of the central protuberance. This Bdellovibrio bacteriovorus (strain ATCC 15356 / DSM 50701 / NCIMB 9529 / HD100) protein is Large ribosomal subunit protein uL18.